Reading from the N-terminus, the 317-residue chain is Ribosomal RNA small subunit methyltransferase A (317 aa).

Residues N37, V39, G64, E85, D115, and N134 each coordinate S-adenosyl-L-methionine. The interval 293-317 (GGSDEATSTGRDARAPDISGHASAS) is disordered.

Belongs to the class I-like SAM-binding methyltransferase superfamily. rRNA adenine N(6)-methyltransferase family. RsmA subfamily.

The protein resides in the cytoplasm. It carries out the reaction adenosine(1518)/adenosine(1519) in 16S rRNA + 4 S-adenosyl-L-methionine = N(6)-dimethyladenosine(1518)/N(6)-dimethyladenosine(1519) in 16S rRNA + 4 S-adenosyl-L-homocysteine + 4 H(+). Specifically dimethylates two adjacent adenosines (A1518 and A1519) in the loop of a conserved hairpin near the 3'-end of 16S rRNA in the 30S particle. May play a critical role in biogenesis of 30S subunits. This Mycobacterium bovis (strain BCG / Tokyo 172 / ATCC 35737 / TMC 1019) protein is Ribosomal RNA small subunit methyltransferase A.